The chain runs to 477 residues: Proton-coupled amino acid transporter 3 (477 aa).

The Cytoplasmic portion of the chain corresponds to 1–54 (MGNVPLLREVGKCQRNMFGRSTASSKGSSNSRSSSSTSPKKGPRREADALMFIQ). Residues 19–40 (GRSTASSKGSSNSRSSSSTSPK) show a composition bias toward low complexity. Positions 19 to 43 (GRSTASSKGSSNSRSSSSTSPKKGP) are disordered. The helical transmembrane segment at 55–75 (IFIHLLKSNIGTGFLGLPLAV) threads the bilayer. At 76-77 (KN) the chain is on the extracellular side. A helical transmembrane segment spans residues 78 to 98 (AGLLVGPVSLLAIGALTVHCM). Residues 99 to 144 (DILLNCACHLTQRLQRSFVNYEETTMYSLETCPSPWLRTHSVWGRY) lie on the Cytoplasmic side of the membrane. A helical membrane pass occupies residues 145-165 (VVSFLLIVTQLGFCSVYFMFL). Residues 166–202 (ADNLQQIMEEAHFTSNVCQPRQSLVMTSILDTRFYML) lie on the Extracellular side of the membrane. The helical transmembrane segment at 203 to 223 (TILPFLILLVLIQNPQVLSIF) threads the bilayer. Residues 224 to 225 (ST) are Cytoplasmic-facing. The chain crosses the membrane as a helical span at residues 226 to 246 (LATITTLSSLALIFEYLIQTP). Residues 247 to 259 (HHSNLPLVANWKT) lie on the Extracellular side of the membrane. Residues 260–280 (FLLFFGTAIFTFEGVGMVLPL) form a helical membrane-spanning segment. Residues 281–291 (KSQMKSPQQFP) are Cytoplasmic-facing. A helical membrane pass occupies residues 292–312 (AVLYLGMSFVIFLYICLGTLG). The Extracellular portion of the chain corresponds to 313–344 (YMKFGTDTQASITLNLPICWLYQSVKLMYSVG). A helical membrane pass occupies residues 345 to 365 (IFFTYALQFHVPAEIIVPYVV). Residues 366 to 374 (SRVSENWAL) are Cytoplasmic-facing. Residues 375-395 (FVDLTVRTALVCLTCFSAVLI) form a helical membrane-spanning segment. At 396–399 (PRLD) the chain is on the extracellular side. The helical transmembrane segment at 400-420 (LVISLVGSVSSSALAIIIPPL) threads the bilayer. Over 421–432 (LEIATFYSENIS) the chain is Cytoplasmic. The chain crosses the membrane as a helical span at residues 433–453 (CATIVKDIMISILGLLGCVLG). The Extracellular portion of the chain corresponds to 454-477 (TYQALYEMTQQTHFYMANSTRVHI).

It belongs to the amino acid/polyamine transporter 2 family. In terms of tissue distribution, specifically expressed in testis.

The protein resides in the membrane. This is Proton-coupled amino acid transporter 3 (Slc36a3) from Mus musculus (Mouse).